The primary structure comprises 198 residues: Recombination protein RecR (198 aa).

The C4-type zinc-finger motif lies at Cys56–Cys71. Residues His79–Pro174 form the Toprim domain.

The protein belongs to the RecR family.

May play a role in DNA repair. It seems to be involved in an RecBC-independent recombinational process of DNA repair. It may act with RecF and RecO. This Xylella fastidiosa (strain Temecula1 / ATCC 700964) protein is Recombination protein RecR.